The primary structure comprises 830 residues: Pentatricopeptide repeat-containing protein At5g55740, chloroplastic (830 aa).

A chloroplast-targeting transit peptide spans Met-1–Thr-59. Positions Phe-15–Thr-36 are disordered. PPR repeat units follow at residues Gly-69–Tyr-103, Asn-106–Arg-136, Asn-137–Pro-171, Asp-172–Asp-206, Cys-207–Arg-237, Asn-238–Pro-272, Thr-273–Leu-307, Asp-308–Lys-338, Asp-339–Tyr-373, Asp-374–Ser-408, Asp-409–Lys-439, Asp-440–Pro-474, Asn-475–Pro-509, Asn-510–Pro-544, Asn-545–Asn-575, Leu-581–Ser-611, Glu-612–Pro-646, Asp-647–Pro-682, and Cys-683–Lys-713. The interval Met-718 to Thr-793 is type E motif. The segment at Glu-796–Gly-826 is type E(+) motif.

It belongs to the PPR family. PCMP-E subfamily.

The protein localises to the plastid. It localises to the chloroplast. Functionally, plays a major role in chloroplast RNA editing. Acts as a site-recognition transacting factor involved in the edition of the site 2 of ndhD (ndhD-2), which encodes a subunit of the NDH complex. This chain is Pentatricopeptide repeat-containing protein At5g55740, chloroplastic (CRR21), found in Arabidopsis thaliana (Mouse-ear cress).